Reading from the N-terminus, the 103-residue chain is Co-chaperonin GroES (103 aa).

Belongs to the GroES chaperonin family. As to quaternary structure, heptamer of 7 subunits arranged in a ring. Interacts with the chaperonin GroEL.

It localises to the cytoplasm. Its function is as follows. Together with the chaperonin GroEL, plays an essential role in assisting protein folding. The GroEL-GroES system forms a nano-cage that allows encapsulation of the non-native substrate proteins and provides a physical environment optimized to promote and accelerate protein folding. GroES binds to the apical surface of the GroEL ring, thereby capping the opening of the GroEL channel. In Gloeothece citriformis (strain PCC 7424) (Cyanothece sp. (strain PCC 7424)), this protein is Co-chaperonin GroES.